Consider the following 32-residue polypeptide: Photosystem II reaction center protein Z (32 aa).

A helical membrane pass occupies residues 9–31 (FILIGSASWAALVLLVGSLNSFV).

This sequence belongs to the PsbZ family. PSII is composed of 1 copy each of membrane proteins PsbA, PsbB, PsbC, PsbD, PsbE, PsbF, PsbH, PsbI, PsbJ, PsbK, PsbL, PsbM, PsbT, PsbY, PsbZ, Psb30/Ycf12, at least 3 peripheral proteins of the oxygen-evolving complex and a large number of cofactors. It forms dimeric complexes.

The protein localises to the plastid. Its subcellular location is the chloroplast thylakoid membrane. May control the interaction of photosystem II (PSII) cores with the light-harvesting antenna, regulates electron flow through the 2 photosystem reaction centers. PSII is a light-driven water plastoquinone oxidoreductase, using light energy to abstract electrons from H(2)O, generating a proton gradient subsequently used for ATP formation. The chain is Photosystem II reaction center protein Z from Euglena viridis (Cercaria viridis).